The sequence spans 195 residues: Dephospho-CoA kinase (195 aa).

The region spanning 2–195 (IIGLTGGIGV…DIVDSLSLSS (194 aa)) is the DPCK domain. An ATP-binding site is contributed by 10–15 (GVGKSF).

It belongs to the CoaE family.

It localises to the cytoplasm. The enzyme catalyses 3'-dephospho-CoA + ATP = ADP + CoA + H(+). Its pathway is cofactor biosynthesis; coenzyme A biosynthesis; CoA from (R)-pantothenate: step 5/5. Functionally, catalyzes the phosphorylation of the 3'-hydroxyl group of dephosphocoenzyme A to form coenzyme A. The polypeptide is Dephospho-CoA kinase (Wolbachia sp. subsp. Brugia malayi (strain TRS)).